Consider the following 217-residue polypeptide: Ras-related protein Rab-19 (217 aa).

Positions 26, 28, 29, 30, 31, 32, 42, 43, 44, 45, and 49 each coordinate GTP. Thr-31 contributes to the Mg(2+) binding site. Residues 39–54 (SGVYSESQQNTIGVDF) carry the Switch 1 motif. Mg(2+) is bound by residues Thr-49 and Asp-72. Residues 74 to 89 (AGQERFRTITQSYYRS) carry the Switch 2 motif. Gly-75, Asn-130, Lys-131, Asp-133, Ser-161, Ala-162, and Lys-163 together coordinate GTP. S-geranylgeranyl cysteine attachment occurs at residues Cys-215 and Cys-217. A Cysteine methyl ester modification is found at Cys-217.

Belongs to the small GTPase superfamily. Rab family. It depends on Mg(2+) as a cofactor. As to expression, expressed in a tissue-specific manner. Detected at high levels in intestine, lung and spleen, and at a lower level in kidney.

Its subcellular location is the cell membrane. The catalysed reaction is GTP + H2O = GDP + phosphate + H(+). Its activity is regulated as follows. Regulated by guanine nucleotide exchange factors (GEFs) which promote the exchange of bound GDP for free GTP. Regulated by GTPase activating proteins (GAPs) which increase the GTP hydrolysis activity. Inhibited by GDP dissociation inhibitors (GDIs). In terms of biological role, the small GTPases Rab are key regulators of intracellular membrane trafficking, from the formation of transport vesicles to their fusion with membranes. Rabs cycle between an inactive GDP-bound form and an active GTP-bound form that is able to recruit to membranes different set of downstream effectors directly responsible for vesicle formation, movement, tethering and fusion. In Mus musculus (Mouse), this protein is Ras-related protein Rab-19.